The sequence spans 409 residues: Patellin-6 (409 aa).

The CRAL-TRIO domain maps to 116-294; sequence EKLTEEDLGF…QYGGLSRPTD (179 aa). The GOLD domain maps to 270 to 404; sequence AETLYKFIRP…VAAYRYTVRK (135 aa).

It belongs to the patellin family.

It is found in the membrane. The protein localises to the cytoplasm. Its function is as follows. Carrier protein that may be involved in membrane-trafficking events associated with cell-plate formation during cytokinesis. Binds to some hydrophobic molecules such as phosphoinositides and promotes their transfer between the different cellular sites. The sequence is that of Patellin-6 (PATL6) from Arabidopsis thaliana (Mouse-ear cress).